The primary structure comprises 289 residues: Enoyl-CoA hydratase domain-containing protein 3, mitochondrial (289 aa).

The N-terminal 14 residues, 1–14, are a transit peptide targeting the mitochondrion; it reads MLLRGFSELLKCRG.

The protein belongs to the enoyl-CoA hydratase/isomerase family.

Its subcellular location is the mitochondrion. May play a role in fatty acid biosynthesis and insulin sensitivity. The protein is Enoyl-CoA hydratase domain-containing protein 3, mitochondrial (echdc3) of Danio rerio (Zebrafish).